The primary structure comprises 215 residues: Sodium channel regulatory subunit beta-2 (215 aa).

An N-terminal signal peptide occupies residues 1-29 (MHRDAWLPRPAFSLTGLSLFFSLVPPGRS). At 30 to 157 (MEVTAPTTLS…LEVPPERDST (128 aa)) the chain is on the extracellular side. One can recognise an Ig-like C2-type domain in the interval 32 to 154 (VTAPTTLSVL…QVLLEVPPER (123 aa)). N42, N66, and N74 each carry an N-linked (GlcNAc...) asparagine glycan. 2 disulfide bridges follow: C50–C127 and C72–C75. The chain crosses the membrane as a helical span at residues 158–179 (VAVIVGASVGGFLAVVILVLMV). Over 180-215 (VKCVRRKKEQKLSTDDLKTEEEGKMDGEGNAEDGTK) the chain is Cytoplasmic. Residues 188 to 215 (EQKLSTDDLKTEEEGKMDGEGNAEDGTK) are disordered. Basic and acidic residues predominate over residues 189-215 (QKLSTDDLKTEEEGKMDGEGNAEDGTK). At S192 the chain carries Phosphoserine.

It belongs to the sodium channel auxiliary subunit SCN2B (TC 8.A.17) family. A voltage-gated sodium (Nav) channel consists of an ion-conducting pore-forming alpha subunit functional on its own that is regulated by one or more beta subunits. The beta subunit SCN2B is disulfide-linked to the pore-forming alpha subunit. Interacts with SCN1A; regulatory subunit of SCN1A/Nav1.1. Interacts with SCN2A; regulatory subunit of SCN2A/Nav1.2. Interacts with SCN3A; regulatory subunit of SCN3A/Nav1.3. Interacts with SCN5A; regulatory subunit of SCN5A/Nav1.5. Interacts with SCN8A; regulatory subunit of SCN8A/Nav1.6. Interacts with SCN9A; regulatory subunit of SCN9A/Nav1.7. Interacts with SCN10A; regulatory subunit of SCN10A/Nav1.8. Interacts with TNR; may play a crucial role in clustering and regulation of activity of SCN2B-containing Nav channels at nodes of Ranvier.

Its subcellular location is the cell membrane. The protein localises to the cell projection. The protein resides in the axon. Its function is as follows. Regulatory subunit of multiple voltage-gated sodium (Nav) channels directly mediating the depolarization of excitable membranes. Navs, also called VGSCs (voltage-gated sodium channels) or VDSCs (voltage-dependent sodium channels), operate by switching between closed and open conformations depending on the voltage difference across the membrane. In the open conformation they allow Na(+) ions to selectively pass through the pore, along their electrochemical gradient. The influx of Na+ ions provokes membrane depolarization, initiating the propagation of electrical signals throughout cells and tissues. The accessory beta subunits participate in localization and functional modulation of the Nav channels. Modulates the activity of SCN1A/Nav1.1, SCN2A/Nav1.2, SCN2A/Nav1.3, SCN5A/Nav1.5, SCN8A/Nav1.6, SCN9A/Nav1.7 and SCN10A/Nav1.8. In Mus musculus (Mouse), this protein is Sodium channel regulatory subunit beta-2.